The following is a 2073-amino-acid chain: MVEAEQVHQSLRSLVLSYAHFSPSILIPASQYLLAAQLRDEFLSLHPAPSAESVEKEGAELEFEHELHLLAGFLGLIAAKEEETPGQYTQLLRIITLEFERTFLAGNEVHAVVHSLGLNIPAQKDVVRFYYHSCALIGQTTKFHGSALLDESSVKLAAIFGGQGYEDYFDELIELYEVYAPFAAELIQVLSKHLFTLSQNEQASKVYSKGLNVLDWLAGERPERDYLVSAPVSLPLVGLTQLVHFSVTAQILGLNPGELASRFSAASGHSQGIVVAAAVSASTDSASFMENAKVALTTLFWIGVRSQQTFPTTTLPPSVVADSLASSEGNPTPMLAVRDLPIETLNKHIETTNTHLPEDRKVSLSLVNGPRSFVVSGPARSLYGLNLSLRKEKADGQNQSRIPHSKRKLRFINRFLSISVPFHSPYLAPVRSLLEKDLQGLQFSALKVPVYSTDDAGDLRFEQPSKLLLALAVMITEKVVHWEEACGFPDVTHIIDFGPGGISGVGSLTRANKDGQGVRVIVADSFESLDMGAKFEIFDRDAKSIEFAPNWVKLYSPKLVKNKLGRVYVDTRLSRMLGLPPLWVAGMTPTSVPWQFCSAIAKAGFTYELAGGGYFDPKMMREAIHKLSLNIPPGAGICVNVIYINPRTYAWQIPLIRDMVAEGYPIRGVTIAAGIPSLEVANELISTLGVQYLCLKPGSVEAVNAVISIAKANPTFPIVLQWTGGRAGGHHSFEDFHSPILLTYSAIRRCDNIVLIAGSGFGGADDTEPYLTGEWSAAFKLPPMPFDGILFGSRLMVAKEAHTSLAAKEAIVAAKGVDDSEWEKTYDGPTGGIVTVLSELGEPIHKLATRGIMFWKELDDTIFSLPRPKRLPALLAKKQYIIKRLNDDFQKVYFPAHIVEQVSPEKFKFEAVDSVEDMTYAELLYRAIDLMYVTKEKRWIDVTLRTFTGKLMRRIEERFTQDVGKTTLIENFEDLNDPYPVAARFLDAYPEASTQDLNTQDAQFFYSLCSNPFQKPVPFIPAIDDTFEFYFKKDSLWQSEDLAAVVGEDVGRVAILQGPMAAKHSTKVNEPAKELLDGINETHIQHFIKKFYAGDEKKIPIVEYFGGVPPVNVSHKSLESVSVTEEAGSKVYKLPEIGSNSALPSKKLWFELLAGPEYTWFRAIFTTQRVAKGWKLEHNPVRRIFAPRYGQRAVVKGKDNDTVVELYETQSGNYVLAARLSYDGETIVVSMFENRNALKKEVHLDFLFKYEPSAGYSPVSEILDGRNDRIKHFYWALWFGEEPYPENASITDTFTGPEVTVTGNMIEDFCRTVGNHNEAYTKRAIRKRMAPMDFAIVVGWQAITKAIFPKAIDGDLLRLVHLSNSFRMVGSHSLMEGDKVTTSASIIAILNNDSGKTVTVKGTVYRDGKEVIEVISRFLYRGTFTDFENTFEHTQETPMQLTLATPKDVAVLQSKSWFQLLDPSQDLSGSILTFRLNSYVRFKDQKVKSSVETKGIVLSELPSKAIIQVASVDFQSVDCHGNPVIEFLKRNGKPIEQPVEFENGGYSVIQVMDEGYSPVFVTPPTNSPYAEVSGDYNPIHVSPTFAAFVELPGTHGITHGMYTSAAARRFVETYAAQNVPERVKHYEVTFVNMVLPNTELITKLSHTGMINGRKIIKVEVLNQETSEPVLVGTAEVEQPVSAYVFTGQGSQEQGMGMDLYASSPVARKIWDSADKHFLTNYGFSIIDIVKHNPHSITIHFGGSKGKKIRDNYMAMAYEKLMEDGTSKVVPVFETITKDSTSFSFTHPSGLLSATQFTQPALTLMEKSAFEDMRSKGLVQNDCAFAGHSLGEYSALSAMGDVLSIEALVDLVFLRGLTMQNAVHRDELGRSDYGMVAANPSRVSASFTDAALRFIVDHIGQQTNLLLEIVNYNVENQQYVVSGNLLSLSTLGHVLNFLKVQKIDFEKLKETLTIEQLKEQLTDIVEACHAKTLEQQKKTGRIELERGYATIPLKIDVPFHSSFLRGGVRMFREYLVKKIFPHQINVAKLRGKYIPNLTAKPFEISKEYFQNVYDLTGSQRIKKILQNWDEYESS.

Residues 1–459 (MVEAEQVHQS…VYSTDDAGDL (459 aa)) form an acetyltransferase region. Ser270 serves as the catalytic For acetyltransferase activity. Positions 470–858 (ALAVMITEKV…TRGIMFWKEL (389 aa)) are enoyl reductase. The residue at position 1122 (Ser1122) is a Phosphoserine. Residues 1155 to 1644 (GPEYTWFRAI…LPNTELITKL (490 aa)) are dehydratase. Residue His1361 is the For dehydratase activity of the active site. Residues 1558–1667 (PVFVTPPTNS…VEVLNQETSE (110 aa)) enclose the MaoC-like domain. Residues 1645-2073 (SHTGMINGRK…LQNWDEYESS (429 aa)) are malonyl/palmitoyl transferase. Catalysis depends on Ser1828, which acts as the For malonyltransferase activity. At Ser2073 the chain carries Phosphoserine.

The protein belongs to the fungal fatty acid synthetase subunit beta family. [Alpha(6)beta(6)] hexamers of two multifunctional subunits (alpha and beta).

The enzyme catalyses acetyl-CoA + n malonyl-CoA + 2n NADPH + 4n H(+) = a long-chain-acyl-CoA + n CoA + n CO2 + 2n NADP(+).. It catalyses the reaction holo-[ACP] + acetyl-CoA = acetyl-[ACP] + CoA. It carries out the reaction holo-[ACP] + malonyl-CoA = malonyl-[ACP] + CoA. The catalysed reaction is a (3R)-hydroxyacyl-[ACP] = a (2E)-enoyl-[ACP] + H2O. The enzyme catalyses a 2,3-saturated acyl-[ACP] + NAD(+) = a (2E)-enoyl-[ACP] + NADH + H(+). It catalyses the reaction (9Z)-octadecenoyl-[ACP] + H2O = (9Z)-octadecenoate + holo-[ACP] + H(+). In terms of biological role, fatty acid synthetase catalyzes the formation of long-chain fatty acids from acetyl-CoA, malonyl-CoA and NADPH. The beta subunit contains domains for: [acyl-carrier-protein] acetyltransferase and malonyltransferase, S-acyl fatty acid synthase thioesterase, enoyl-[acyl-carrier-protein] reductase, and 3-hydroxypalmitoyl-[acyl-carrier-protein] dehydratase. The chain is Fatty acid synthase subunit beta (fas1) from Schizosaccharomyces pombe (strain 972 / ATCC 24843) (Fission yeast).